Here is a 168-residue protein sequence, read N- to C-terminus: Transcription antitermination protein NusB (168 aa).

It belongs to the NusB family.

Functionally, involved in transcription antitermination. Required for transcription of ribosomal RNA (rRNA) genes. Binds specifically to the boxA antiterminator sequence of the ribosomal RNA (rrn) operons. The chain is Transcription antitermination protein NusB from Prosthecochloris aestuarii (strain DSM 271 / SK 413).